We begin with the raw amino-acid sequence, 473 residues long: O-methyltransferase aclU (473 aa).

S-adenosyl-L-methionine contacts are provided by residues D320 and 354-356 (GDF). The Proton acceptor role is filled by H373.

The protein belongs to the class I-like SAM-binding methyltransferase superfamily. Cation-independent O-methyltransferase family. COMT subfamily.

Its pathway is mycotoxin biosynthesis. Its function is as follows. O-methyltransferase; part of the gene cluster that mediates the biosynthesis of aspirochlorine (or antibiotic A30641), an unusual halogenated spiro compound with distinctive antifungal properties due to selective inhibition of protein biosynthesis, and which is also active against bacteria, viruses, and murine tumor cells. The non-ribosomal peptide synthetase (NRPS) aclP is responsible the formation of the diketopiperazine (DKP) core from the condensation of 2 phenylalanine residues. One Phe residue is tailored into chlorotyrosine by hydroxylation and chlorination, whereas the second Phe undergoes an unprecedented C-C bond cleavage to be converted into glycine. After formation of the DKP, sulfur is incorporated into the DKP by conjugation with glutathione by aclG, followed by its stepwise degradation to the thiol by aclI, aclJ and aclK, and the dithiol oxidation by aclT. In addition, oxygenases (aclB, aclC, aclL and aclO) and O-methyltransferases (aclM and aclU) act as tailoring enzymes to produce the intermediate dechloroaspirochlorine. Ultimately, chlorination of dechloroaspirochlorine by the halogenase aclH is the last step in the aspirochlorine pathway. This Aspergillus oryzae (strain ATCC 42149 / RIB 40) (Yellow koji mold) protein is O-methyltransferase aclU.